The sequence spans 518 residues: Glutamate--cysteine ligase (518 aa).

Belongs to the glutamate--cysteine ligase type 1 family. Type 1 subfamily.

The catalysed reaction is L-cysteine + L-glutamate + ATP = gamma-L-glutamyl-L-cysteine + ADP + phosphate + H(+). It functions in the pathway sulfur metabolism; glutathione biosynthesis; glutathione from L-cysteine and L-glutamate: step 1/2. This is Glutamate--cysteine ligase from Escherichia coli O127:H6 (strain E2348/69 / EPEC).